Reading from the N-terminus, the 297-residue chain is Heme A synthase (297 aa).

Residues M1–S6 are Cytoplasmic-facing. A helical transmembrane segment spans residues I7–T27. Residues K28–R62 lie on the Extracellular side of the membrane. C35 and C42 form a disulfide bridge. E58 is a catalytic residue. H61 contacts heme o. The helical transmembrane segment at A63 to F83 threads the bilayer. At K84 to K90 the chain is on the cytoplasmic side. The helical transmembrane segment at I91–V111 threads the bilayer. Residues V112–A121 lie on the Extracellular side of the membrane. The helical transmembrane segment at L122–M142 threads the bilayer. H123 serves as a coordination point for heme o. At E143–L160 the chain is on the cytoplasmic side. A helical transmembrane segment spans residues L161–V181. The Extracellular portion of the chain corresponds to G182 to E201. An intrachain disulfide couples C187 to C193. Residues A202–V222 form a helical membrane-spanning segment. A heme b-binding site is contributed by H208. The Cytoplasmic segment spans residues H223–T236. A helical membrane pass occupies residues G237–L257. Residues G258 to T262 lie on the Extracellular side of the membrane. The chain crosses the membrane as a helical span at residues Y263–A283. Heme b is bound at residue H268. Over Y284–R297 the chain is Cytoplasmic.

It belongs to the COX15/CtaA family. Type 1 subfamily. Interacts with CtaB. It depends on heme b as a cofactor.

Its subcellular location is the cell membrane. The enzyme catalyses Fe(II)-heme o + 2 A + H2O = Fe(II)-heme a + 2 AH2. Its pathway is porphyrin-containing compound metabolism; heme A biosynthesis; heme A from heme O: step 1/1. Functionally, catalyzes the conversion of heme O to heme A by two successive hydroxylations of the methyl group at C8. The first hydroxylation forms heme I, the second hydroxylation results in an unstable dihydroxymethyl group, which spontaneously dehydrates, resulting in the formyl group of heme A. The chain is Heme A synthase from Exiguobacterium sibiricum (strain DSM 17290 / CCUG 55495 / CIP 109462 / JCM 13490 / 255-15).